A 251-amino-acid polypeptide reads, in one-letter code: ATP synthase delta chain, chloroplastic (251 aa).

The transit peptide at 1–64 (MASLQHTTAS…STGGALGARM (64 aa)) directs the protein to the chloroplast.

Belongs to the ATPase delta chain family. As to quaternary structure, F-type ATPases have 2 components, CF(1) - the catalytic core - and CF(0) - the membrane proton channel. CF(1) has five subunits: alpha(3), beta(3), gamma(1), delta(1), epsilon(1). CF(0) has three main subunits: a, b and c.

The protein resides in the plastid. It localises to the chloroplast thylakoid membrane. Its function is as follows. This protein seems to be part of the stalk that links CF(0) to CF(1). It either transmits conformational changes from CF(0) into CF(1) or is implicated in proton conduction. The protein is ATP synthase delta chain, chloroplastic (ATPD) of Pisum sativum (Garden pea).